Here is a 276-residue protein sequence, read N- to C-terminus: Large ribosomal subunit protein uL2 (276 aa).

2 disordered regions span residues 36–58 (PLHK…GGGH) and 214–276 (LGKR…RRKK).

The protein belongs to the universal ribosomal protein uL2 family. As to quaternary structure, part of the 50S ribosomal subunit. Forms a bridge to the 30S subunit in the 70S ribosome.

In terms of biological role, one of the primary rRNA binding proteins. Required for association of the 30S and 50S subunits to form the 70S ribosome, for tRNA binding and peptide bond formation. It has been suggested to have peptidyltransferase activity; this is somewhat controversial. Makes several contacts with the 16S rRNA in the 70S ribosome. The polypeptide is Large ribosomal subunit protein uL2 (Halalkalibacterium halodurans (strain ATCC BAA-125 / DSM 18197 / FERM 7344 / JCM 9153 / C-125) (Bacillus halodurans)).